The sequence spans 945 residues: Argonaute protein wago-1 (945 aa).

Residues 1-20 (MSPHPPQPHPPMPPMPPVTA) show a composition bias toward pro residues. The disordered stretch occupies residues 1–41 (MSPHPPQPHPPMPPMPPVTAPPGAMTPMPPVPADAQKLHQS). One can recognise a PAZ domain in the interval 322–432 (TVIQKLFDIT…FPAELMTVSR (111 aa)). One can recognise a Piwi domain in the interval 636–899 (VKDGKRLTLE…PLYVANEYAK (264 aa)).

This sequence belongs to the Argonaute family. WAGO subfamily. As to quaternary structure, interacts with rde-12. Interacts with znfx-1. Enriched in sperm and oocytes.

It localises to the cytoplasmic granule. Argonaute protein which is involved in the endogenous small interfering RNA (endo-siRNA) pathway. Interacts with secondary 22G-RNAs, which are RNA-dependent RNA polymerase-derived endo-siRNAs, typically 22 nucleotides in length with a 5'guanosine residue. In the germline, functions in a genome surveillance system to silence transposons and aberrant transcripts. This chain is Argonaute protein wago-1, found in Caenorhabditis elegans.